A 393-amino-acid polypeptide reads, in one-letter code: NAD(P)H-quinone oxidoreductase subunit H, chloroplastic (393 aa).

It belongs to the complex I 49 kDa subunit family. NDH is composed of at least 16 different subunits, 5 of which are encoded in the nucleus.

It localises to the plastid. It is found in the chloroplast thylakoid membrane. The enzyme catalyses a plastoquinone + NADH + (n+1) H(+)(in) = a plastoquinol + NAD(+) + n H(+)(out). It catalyses the reaction a plastoquinone + NADPH + (n+1) H(+)(in) = a plastoquinol + NADP(+) + n H(+)(out). Its function is as follows. NDH shuttles electrons from NAD(P)H:plastoquinone, via FMN and iron-sulfur (Fe-S) centers, to quinones in the photosynthetic chain and possibly in a chloroplast respiratory chain. The immediate electron acceptor for the enzyme in this species is believed to be plastoquinone. Couples the redox reaction to proton translocation, and thus conserves the redox energy in a proton gradient. This Oenothera biennis (German evening primrose) protein is NAD(P)H-quinone oxidoreductase subunit H, chloroplastic.